We begin with the raw amino-acid sequence, 692 residues long: Aspartate--tRNA ligase, mitochondrial (692 aa).

The transit peptide at 1-61 (MNRVILKDSK…RNFTNTINNN (61 aa)) directs the protein to the mitochondrion. Residue glutamate 264 coordinates L-aspartate. The aspartate stretch occupies residues 287–290 (QQYK). Arginine 309 is a binding site for L-aspartate. Residues 309–311 (RDE) and glutamate 590 each bind ATP. An L-aspartate-binding site is contributed by arginine 597. 642–645 (GFDR) contacts ATP.

The protein belongs to the class-II aminoacyl-tRNA synthetase family. Type 1 subfamily.

It is found in the mitochondrion matrix. It carries out the reaction tRNA(Asp) + L-aspartate + ATP = L-aspartyl-tRNA(Asp) + AMP + diphosphate. The polypeptide is Aspartate--tRNA ligase, mitochondrial (maspS) (Dictyostelium discoideum (Social amoeba)).